A 343-amino-acid chain; its full sequence is N-acetyl-gamma-glutamyl-phosphate reductase (343 aa).

Residue Cys149 is part of the active site.

It belongs to the NAGSA dehydrogenase family. Type 1 subfamily.

Its subcellular location is the cytoplasm. The enzyme catalyses N-acetyl-L-glutamate 5-semialdehyde + phosphate + NADP(+) = N-acetyl-L-glutamyl 5-phosphate + NADPH + H(+). Its pathway is amino-acid biosynthesis; L-arginine biosynthesis; N(2)-acetyl-L-ornithine from L-glutamate: step 3/4. Catalyzes the NADPH-dependent reduction of N-acetyl-5-glutamyl phosphate to yield N-acetyl-L-glutamate 5-semialdehyde. This Alkalilimnicola ehrlichii (strain ATCC BAA-1101 / DSM 17681 / MLHE-1) protein is N-acetyl-gamma-glutamyl-phosphate reductase.